The sequence spans 211 residues: Protein-L-isoaspartate O-methyltransferase (211 aa).

Residue Ser-60 is part of the active site.

It belongs to the methyltransferase superfamily. L-isoaspartyl/D-aspartyl protein methyltransferase family.

The protein localises to the cytoplasm. It catalyses the reaction [protein]-L-isoaspartate + S-adenosyl-L-methionine = [protein]-L-isoaspartate alpha-methyl ester + S-adenosyl-L-homocysteine. Functionally, catalyzes the methyl esterification of L-isoaspartyl residues in peptides and proteins that result from spontaneous decomposition of normal L-aspartyl and L-asparaginyl residues. It plays a role in the repair and/or degradation of damaged proteins. This chain is Protein-L-isoaspartate O-methyltransferase, found in Pseudomonas syringae pv. syringae (strain B728a).